The following is a 523-amino-acid chain: Putative UDP-glucuronosyltransferase ugt-50 (523 aa).

The N-terminal stretch at 1–25 is a signal peptide; the sequence is MHYSQMRWMFFCLTALLHGSFIVNA. Residues asparagine 84, asparagine 248, asparagine 283, and asparagine 487 are each glycosylated (N-linked (GlcNAc...) asparagine). Residues 490–508 traverse the membrane as a helical segment; it reads IIEHNHLDLFFYLCIISLL.

Belongs to the UDP-glycosyltransferase family.

The protein localises to the membrane. It carries out the reaction glucuronate acceptor + UDP-alpha-D-glucuronate = acceptor beta-D-glucuronoside + UDP + H(+). The polypeptide is Putative UDP-glucuronosyltransferase ugt-50 (ugt-50) (Caenorhabditis elegans).